Reading from the N-terminus, the 858-residue chain is Envelope glycoprotein gp160 (858 aa).

An N-terminal signal peptide occupies residues 1-19 (MMNQLLIAILLASACLVYC). Topologically, residues 20 to 679 (TQYVTVFYGV…LTSWVKYIQY (660 aa)) are extracellular. Asparagine 34 carries an N-linked (GlcNAc...) asparagine; by host glycan. An intrachain disulfide couples cysteine 41 to cysteine 54. N-linked (GlcNAc...) asparagine; by host glycans are attached at residues asparagine 67, asparagine 76, asparagine 119, asparagine 120, asparagine 151, asparagine 166, asparagine 179, asparagine 192, asparagine 193, asparagine 196, asparagine 206, asparagine 238, asparagine 241, asparagine 248, asparagine 272, asparagine 278, asparagine 289, asparagine 300, asparagine 310, asparagine 367, asparagine 371, asparagine 400, asparagine 410, asparagine 447, asparagine 463, and asparagine 466. Disulfide bonds link cysteine 98/cysteine 214, cysteine 105/cysteine 205, cysteine 110/cysteine 163, cysteine 227/cysteine 257, and cysteine 237/cysteine 249. The interval 110-162 (CSSTESSTGNNTTSKSTSTTTTTPTDQEQEISEDTPCARADNCSGLGEEETIN) is V1. Residues 111-134 (SSTESSTGNNTTSKSTSTTTTTPT) are compositionally biased toward low complexity. Residues 111-142 (SSTESSTGNNTTSKSTSTTTTTPTDQEQEISE) are disordered. A V2 region spans residues 163–205 (CQFNMTGLERDKKKQYNETWYSKDVVCETNNSTNQTQCYMNHC). A V3 region spans residues 305–339 (CKRPGNKTVKQIMLMSGHVFHSHYQPINKRPRQAW). An intrachain disulfide couples cysteine 305 to cysteine 340. 2 disulfide bridges follow: cysteine 392/cysteine 446 and cysteine 399/cysteine 419. Residues 399–419 (CNMTWFLNWIENKTHRNYAPC) are V4. The segment at 462–469 (NNQTNITF) is V5. The interval 512 to 532 (GVFVLGFLGFLATAGSAMGAA) is fusion peptide. Residues 575 to 591 (LQARVTAIEKYLQDQAR) are immunosuppression. 3 N-linked (GlcNAc...) asparagine; by host glycosylation sites follow: asparagine 611, asparagine 620, and asparagine 636. Residues 624-645 (QEWEKQVRYLEANISKSLEQAQ) are a coiled coil. The MPER; binding to GalCer stretch occupies residues 657-678 (KLNSWDIFGNWFDLTSWVKYIQ). A helical transmembrane segment spans residues 680–700 (GVLIIVAVIALRIVIYVVQML). The Cytoplasmic portion of the chain corresponds to 701 to 858 (SRLRKGYRPV…IRQGAEIALL (158 aa)). Positions 707-710 (YRPV) match the YXXV motif; contains endocytosis signal motif. Cysteine 773 is lipidated: S-palmitoyl cysteine; by host. Positions 857 to 858 (LL) match the Di-leucine internalization motif motif.

The mature envelope protein (Env) consists of a homotrimer of non-covalently associated gp120-gp41 heterodimers. The resulting complex protrudes from the virus surface as a spike. There seems to be as few as 10 spikes on the average virion. Interacts with human CD4, CCR5 and CXCR4, to form a P4HB/PDI-CD4-CXCR4-gp120 complex. Gp120 also interacts with the C-type lectins CD209/DC-SIGN and CLEC4M/DC-SIGNR (collectively referred to as DC-SIGN(R)). Gp120 and gp41 interact with GalCer. In terms of assembly, the mature envelope protein (Env) consists of a homotrimer of non-covalently associated gp120-gp41 heterodimers. The resulting complex protrudes from the virus surface as a spike. There seems to be as few as 10 spikes on the average virion. In terms of processing, specific enzymatic cleavages in vivo yield mature proteins. Envelope glycoproteins are synthesized as an inactive precursor that is heavily N-glycosylated and processed likely by host cell furin in the Golgi to yield the mature SU and TM proteins. The cleavage site between SU and TM requires the minimal sequence [KR]-X-[KR]-R. Palmitoylation of the transmembrane protein and of Env polyprotein (prior to its proteolytic cleavage) is essential for their association with host cell membrane lipid rafts. Palmitoylation is therefore required for envelope trafficking to classical lipid rafts, but not for viral replication.

The protein localises to the virion membrane. Its subcellular location is the host cell membrane. It localises to the host endosome membrane. Its function is as follows. The surface protein gp120 (SU) attaches the virus to the host lymphoid cell by binding to the primary receptor CD4. This interaction induces a structural rearrangement creating a high affinity binding site for a chemokine coreceptor like CXCR4 and/or CCR5. This peculiar 2 stage receptor-interaction strategy allows gp120 to maintain the highly conserved coreceptor-binding site in a cryptic conformation, protected from neutralizing antibodies. Since CD4 also displays a binding site for the disulfide-isomerase P4HB/PDI, a P4HB/PDI-CD4-CXCR4-gp120 complex may form. In that complex, P4HB/PDI could reach and reduce gp120 disulfide bonds, causing major conformational changes in gp120. TXN, another PDI family member could also be involved in disulfide rearrangements in Env during fusion. These changes are transmitted to the transmembrane protein gp41 and are thought to activate its fusogenic potential by unmasking its fusion peptide. Functionally, the surface protein gp120 is a ligand for CD209/DC-SIGN and CLEC4M/DC-SIGNR, which are respectively found on dendritic cells (DCs), and on endothelial cells of liver sinusoids and lymph node sinuses. These interactions allow capture of viral particles at mucosal surfaces by these cells and subsequent transmission to permissive cells. DCs are professional antigen presenting cells, critical for host immunity by inducing specific immune responses against a broad variety of pathogens. They act as sentinels in various tissues where they take up antigen, process it, and present it to T-cells following migration to lymphoid organs. HIV subverts the migration properties of dendritic cells to gain access to CD4+ T-cells in lymph nodes. Virus transmission to permissive T-cells occurs either in trans (without DCs infection, through viral capture and transmission), or in cis (following DCs productive infection, through the usual CD4-gp120 interaction), thereby inducing a robust infection. In trans infection, bound virions remain infectious over days and it is proposed that they are not degraded, but protected in non-lysosomal acidic organelles within the DCs close to the cell membrane thus contributing to the viral infectious potential during DCs' migration from the periphery to the lymphoid tissues. On arrival at lymphoid tissues, intact virions recycle back to DCs' cell surface allowing virus transmission to CD4+ T-cells. Virion capture also seems to lead to MHC-II-restricted viral antigen presentation, and probably to the activation of HIV-specific CD4+ cells. In terms of biological role, the transmembrane protein gp41 (TM) acts as a class I viral fusion protein. Under the current model, the protein has at least 3 conformational states: pre-fusion native state, pre-hairpin intermediate state, and post-fusion hairpin state. During fusion of viral and target intracellular membranes, the coiled coil regions (heptad repeats) assume a trimer-of-hairpins structure, positioning the fusion peptide in close proximity to the C-terminal region of the ectodomain. The formation of this structure appears to drive apposition and subsequent fusion of viral and target cell membranes. Complete fusion occurs in host cell endosomes and is dynamin-dependent, however some lipid transfer might occur at the plasma membrane. The virus undergoes clathrin-dependent internalization long before endosomal fusion, thus minimizing the surface exposure of conserved viral epitopes during fusion and reducing the efficacy of inhibitors targeting these epitopes. Membranes fusion leads to delivery of the nucleocapsid into the cytoplasm. The envelope glycoprotein gp160 precursor down-modulates cell surface CD4 antigen by interacting with it in the endoplasmic reticulum and blocking its transport to the cell surface. Its function is as follows. The gp120-gp41 heterodimer seems to contribute to T-cell depletion during HIV-1 infection. The envelope glycoproteins expressed on the surface of infected cells induce apoptosis through an interaction with uninfected cells expressing the receptor (CD4) and the coreceptors CXCR4 or CCR5. This type of bystander killing may be obtained by at least three distinct mechanisms. First, the interaction between the 2 cells can induce cellular fusion followed by nuclear fusion within the syncytium. Syncytia are condemned to die from apoptosis. Second, the 2 interacting cells may not fuse entirely and simply exchange plasma membrane lipids, after a sort of hemifusion process, followed by rapid death. Third, it is possible that virus-infected cells, on the point of undergoing apoptosis, fuse with CD4-expressing cells, in which case apoptosis is rapidly transmitted from one cell to the other and thus occurs in a sort of contagious fashion. Functionally, the gp120-gp41 heterodimer allows rapid transcytosis of the virus through CD4 negative cells such as simple epithelial monolayers of the intestinal, rectal and endocervical epithelial barriers. Both gp120 and gp41 specifically recognize glycosphingolipids galactosyl-ceramide (GalCer) or 3' sulfo-galactosyl-ceramide (GalS) present in the lipid rafts structures of epithelial cells. Binding to these alternative receptors allows the rapid transcytosis of the virus through the epithelial cells. This transcytotic vesicle-mediated transport of virions from the apical side to the basolateral side of the epithelial cells does not involve infection of the cells themselves. The chain is Envelope glycoprotein gp160 (env) from Homo sapiens (Human).